Reading from the N-terminus, the 69-residue chain is Large ribosomal subunit protein uL29 (69 aa).

Belongs to the universal ribosomal protein uL29 family.

The polypeptide is Large ribosomal subunit protein uL29 (Parasynechococcus marenigrum (strain WH8102)).